The following is a 738-amino-acid chain: MSTQFRKSNHNSHSSKKLNPALKSKIDTLTELFPDWTSDDLIDIVQEYDDLETIIDKITSGAVTRWDEVKKPAKKEKYEKKEQQHSYVPQQHLPNPEDDITYKSSNNSNSFTSTKHNSSNNYTQARNKKKVQTPRAHTTGKHVNLDKGKHVPSKPVSNTTSWAAAVSVDTKHDVPQDSNDNNNEELEAQGQQAQEKNQEKEQEEQQQQEGHNNKEEHKQIEQPSLSSKKTTSRTSASQPKKMSWAAIATPKPKAVKKTESPLENVAELKKEISDIKKDDQKSEASEEKVNEQETSAQEQEEETAEPSEENEDRVPEVDGEEVQEEAEEKEQVKEEEQTAEELEQEQDNVAAPEEEVTVVEEKVEISAVISEPPEDQANTVPQPQQQSQQPQQPQQPQQPQQPQQPQQQQQPQQPQQPQQQLQQQQQQQQQPVQAQAQAQEEQLSQNYYTQQQQQQYAQQQHQLQQQYLSQQQQYAQQQQQHPQPQSQQPQSQQSPQSQKQGNNVAAQQYYMYQNQFPGYSYPGMFDSQGYAYGQQYQQLAQNNAQTSGNANQYNFQQGYGQAGANTAAANLTSAAAAAAASPATAHAQPQQQQPYGGSFMPYYAHFYQQSFPYGQPQYGVAGQYPYQLPKNNYNYYQTQNGQEQQSPNQGVAQHSEDSQQKQSQQQQQQQPQGQPQPEVQMQNGQPVNPQQQMQFQQYYQFQQQQQQAAAAAAAAAQQGVPYGYNGYDYNSKNSRGFY.

The region spanning 21–63 (ALKSKIDTLTELFPDWTSDDLIDIVQEYDDLETIIDKITSGAV) is the CUE domain. Basic and acidic residues predominate over residues 69–84 (VKKPAKKEKYEKKEQQ). Disordered regions lie at residues 69–455 (VKKP…QQQQ), 467–503 (YLSQ…QGNN), and 640–688 (NGQE…QPVN). Positions 103-121 (KSSNNSNSFTSTKHNSSNN) are enriched in low complexity. A compositionally biased stretch (basic and acidic residues) spans 211 to 220 (HNNKEEHKQI). A compositionally biased stretch (low complexity) spans 224 to 237 (SLSSKKTTSRTSAS). A compositionally biased stretch (basic and acidic residues) spans 256 to 291 (KKTESPLENVAELKKEISDIKKDDQKSEASEEKVNE). Phosphoserine occurs at positions 260, 273, and 307. Composition is skewed to acidic residues over residues 298–328 (EQEE…EAEE) and 337–358 (QTAE…EVTV). Position 338 is a phosphothreonine (threonine 338). 2 stretches are compositionally biased toward low complexity: residues 380–455 (VPQP…QQQQ) and 467–498 (YLSQ…PQSQ). Positions 500-530 (QGNNVAAQQYYMYQNQFPGYSYPGMFDSQGY) are contains the proteolytic activation cleavage site. Serine 646 carries the post-translational modification Phosphoserine. Residues 660-688 (QKQSQQQQQQQPQGQPQPEVQMQNGQPVN) are compositionally biased toward low complexity.

It belongs to the DEF1 family. Homodimer; may form higher order oligomers. Interacts with the large RNA polymerase II subunit RPO21; the interaction is direct and serves to bridge RPO21 to the Elongin complex in a manner dependent on transcription stress. Interacts with RAD26. Ubiquitinated. Post-translationally, proteolytically cleaved by the proteasome in response to transcription stress; the resulting N-terminal form constitutes the activated nuclear form and the C-terminal portion is degraded.

It localises to the cytoplasm. Its subcellular location is the nucleus. It is found in the chromosome. The protein localises to the telomere. Recruits the ubiquitination machinery to RNA polymerase II for polyubiquitination, removal and degradation, when the transcription-coupled repair (TCR) factor RAD26 fails to efficiently displace stalled RNA polymerase II. Also involved in telomere length regulation. Binds DNA. The chain is RNA polymerase II degradation factor 1 (DEF1) from Saccharomyces cerevisiae (strain JAY291) (Baker's yeast).